Reading from the N-terminus, the 969-residue chain is Aspartic protease 5 (969 aa).

The first 22 residues, 1-22 (MEAGAMGGSSFLSFSSGPSAET), serve as a signal peptide directing secretion. Positions 1–45 (MEAGAMGGSSFLSFSSGPSAETSPSSLSPPTSSSPSPSPQLVSDS) are enriched in low complexity. Disordered regions lie at residues 1–65 (MEAG…SSRT), 79–104 (ENEA…AGHL), 128–149 (SSAT…RSSS), 173–193 (SSSS…SACG), and 311–382 (FLSL…DLPR). Topologically, residues 23–820 (SPSSLSPPTS…PEGLPLSPQQ (798 aa)) are lumenal. Positions 311 to 324 (FLSLSSSPRSLASD) are enriched in low complexity. Positions 335–355 (QSREQRGEREGERQRPDKGEE) are enriched in basic and acidic residues. Residues 413–758 (YFLDILVGTP…DREQDRVGFA (346 aa)) enclose the Peptidase A1 domain. The active site involves Asp431. Positions 608–635 (PPESESTPATEALRPVAGESASRRISEK) are disordered. Asp682 is an active-site residue. Positions 768-794 (DQRPRGPDSGDGPKGRPTAPFTVPPLR) are disordered. Residues 769-781 (QRPRGPDSGDGPK) are compositionally biased toward basic and acidic residues. Residues 821–841 (LWVAAALVVVAILIAVTVILL) form a helical membrane-spanning segment. Residues 842–969 (HTIKRPSRSS…TLLDLPLGGE (128 aa)) lie on the Cytoplasmic side of the membrane. A disordered region spans residues 922 to 969 (EDDGDFFGDDSVPSAEEQETAPSLSLREESSPFSASQSTLLDLPLGGE). Residues 952 to 961 (SPFSASQSTL) are compositionally biased toward polar residues.

It belongs to the peptidase A1 family. In terms of processing, may be auto-cleaved to produce a 55 kDa form.

The protein resides in the golgi apparatus membrane. Its function is as follows. In tachyzoites, plays an essential role in the export of several dense granule proteins into the host cell by cleaving the localization motif RRLxx (termed Toxoplasma export element (TEXEL)) located downstream of the N-terminal secretory signal sequence. However, can also regulate the export of proteins that lack the TEXEL motif, such as GRA24. Requires Arg at P3 and P2, and Leu at P1 in the substrate TEXEL motif and, specifically, cleaves after Leu. Cleaves GRA16; proteolytic cleavage is essential for the correct trafficking of GRA16 from the parasite into the infected host nucleus. Cleaves GRA19 and GRA20. Cleaves MYR1. Cleaves LCAT, GRA44, GRA46, GRA46, ROP35/WNG1 and ROP34/WNG2. By regulating the export of dense granule proteins into the host cell, regulates multiple processes during tachyzoite infection of host cells, including recruitment of host mitochondria to the parasitophorous vacuole (PV), formation of the nanotubular network (NTN) or intravacuolar network (IVN) which are membranous tubules that bud from the PV membrane into the vacuolar lumen and, up-regulation of host cell genes to facilitate the parasite infection and modulate the host innate immune response. At the bradyzoite stage, also involved in the formation of the cyst wall. This chain is Aspartic protease 5, found in Toxoplasma gondii.